The following is a 240-amino-acid chain: 1-(5-phosphoribosyl)-5-[(5-phosphoribosylamino)methylideneamino] imidazole-4-carboxamide isomerase (240 aa).

The active-site Proton acceptor is the D10. D132 serves as the catalytic Proton donor.

Belongs to the HisA/HisF family.

Its subcellular location is the cytoplasm. The enzyme catalyses 1-(5-phospho-beta-D-ribosyl)-5-[(5-phospho-beta-D-ribosylamino)methylideneamino]imidazole-4-carboxamide = 5-[(5-phospho-1-deoxy-D-ribulos-1-ylimino)methylamino]-1-(5-phospho-beta-D-ribosyl)imidazole-4-carboxamide. It participates in amino-acid biosynthesis; L-histidine biosynthesis; L-histidine from 5-phospho-alpha-D-ribose 1-diphosphate: step 4/9. The sequence is that of 1-(5-phosphoribosyl)-5-[(5-phosphoribosylamino)methylideneamino] imidazole-4-carboxamide isomerase from Methanocella arvoryzae (strain DSM 22066 / NBRC 105507 / MRE50).